Consider the following 476-residue polypeptide: Glutathione synthetase (476 aa).

A substrate-binding site is contributed by Arg-117. Glu-137 contributes to the ATP binding site. Glu-137 and Asn-139 together coordinate Mg(2+). Substrate is bound by residues 141 to 144 (ISSS), 211 to 213 (ERN), Gln-217, and 267 to 270 (RAGY). Residues Lys-308, 367-376 (KPQREGGGNN), Tyr-378, 400-403 (MDKI), and Glu-426 each bind ATP. Glu-371 contributes to the Mg(2+) binding site. Arg-452 is a substrate binding site. Positions 454 and 460 each coordinate ATP. 463-464 (VA) is a substrate binding site.

The protein belongs to the eukaryotic GSH synthase family. In terms of assembly, homodimer. Requires Mg(2+) as cofactor.

The catalysed reaction is gamma-L-glutamyl-L-cysteine + glycine + ATP = glutathione + ADP + phosphate + H(+). Its pathway is sulfur metabolism; glutathione biosynthesis; glutathione from L-cysteine and L-glutamate: step 2/2. The polypeptide is Glutathione synthetase (gshB) (Dictyostelium discoideum (Social amoeba)).